Reading from the N-terminus, the 382-residue chain is D-galactonate dehydratase (382 aa).

Residue Asp183 coordinates Mg(2+). Residue His185 is the Proton donor of the active site. Mg(2+) contacts are provided by Glu209 and Glu235. The active-site Proton acceptor is the His285.

It belongs to the mandelate racemase/muconate lactonizing enzyme family. GalD subfamily. The cofactor is Mg(2+).

The enzyme catalyses D-galactonate = 2-dehydro-3-deoxy-D-galactonate + H2O. It functions in the pathway carbohydrate acid metabolism; D-galactonate degradation; D-glyceraldehyde 3-phosphate and pyruvate from D-galactonate: step 1/3. Functionally, catalyzes the dehydration of D-galactonate to 2-keto-3-deoxy-D-galactonate. In Klebsiella pneumoniae (strain 342), this protein is D-galactonate dehydratase.